The following is a 646-amino-acid chain: 1-deoxy-D-xylulose-5-phosphate synthase (646 aa).

Thiamine diphosphate-binding positions include histidine 86 and 127–129 (AHS). Aspartate 158 serves as a coordination point for Mg(2+). Residues 159-160 (GA), asparagine 188, tyrosine 295, and glutamate 377 each bind thiamine diphosphate. Asparagine 188 serves as a coordination point for Mg(2+).

Belongs to the transketolase family. DXPS subfamily. Homodimer. Mg(2+) is required as a cofactor. Requires thiamine diphosphate as cofactor.

It carries out the reaction D-glyceraldehyde 3-phosphate + pyruvate + H(+) = 1-deoxy-D-xylulose 5-phosphate + CO2. It participates in metabolic intermediate biosynthesis; 1-deoxy-D-xylulose 5-phosphate biosynthesis; 1-deoxy-D-xylulose 5-phosphate from D-glyceraldehyde 3-phosphate and pyruvate: step 1/1. Functionally, catalyzes the acyloin condensation reaction between C atoms 2 and 3 of pyruvate and glyceraldehyde 3-phosphate to yield 1-deoxy-D-xylulose-5-phosphate (DXP). This is 1-deoxy-D-xylulose-5-phosphate synthase from Burkholderia ambifaria (strain ATCC BAA-244 / DSM 16087 / CCUG 44356 / LMG 19182 / AMMD) (Burkholderia cepacia (strain AMMD)).